Consider the following 429-residue polypeptide: 3-phosphoshikimate 1-carboxyvinyltransferase (429 aa).

Residues Lys-20, Ser-21, and Arg-25 each contribute to the 3-phosphoshikimate site. Lys-20 lines the phosphoenolpyruvate pocket. The phosphoenolpyruvate site is built by Gly-89 and Arg-118. 3-phosphoshikimate is bound by residues Ser-164, Ser-165, Gln-166, Ser-192, Asp-311, and Lys-338. Phosphoenolpyruvate is bound at residue Gln-166. Catalysis depends on Asp-311, which acts as the Proton acceptor. Residues Arg-342 and Arg-384 each contribute to the phosphoenolpyruvate site.

This sequence belongs to the EPSP synthase family. As to quaternary structure, monomer.

It is found in the cytoplasm. It catalyses the reaction 3-phosphoshikimate + phosphoenolpyruvate = 5-O-(1-carboxyvinyl)-3-phosphoshikimate + phosphate. It participates in metabolic intermediate biosynthesis; chorismate biosynthesis. Catalyzes the transfer of the enolpyruvyl moiety of phosphoenolpyruvate (PEP) to the 5-hydroxyl of shikimate-3-phosphate (S3P) to produce enolpyruvyl shikimate-3-phosphate and inorganic phosphate. In Methanococcus vannielii (strain ATCC 35089 / DSM 1224 / JCM 13029 / OCM 148 / SB), this protein is 3-phosphoshikimate 1-carboxyvinyltransferase.